The primary structure comprises 397 residues: Digeranylgeranylglycerophospholipid reductase 1 (397 aa).

Residues Ala-18, Asp-37, Cys-48, Ala-49, Gly-51, Arg-104, Ala-128, Asp-284, Gly-296, and Ile-297 each contribute to the FAD site.

The protein belongs to the geranylgeranyl reductase family. DGGGPL reductase subfamily. The cofactor is FAD.

It carries out the reaction a 2,3-bis-O-phytanyl-sn-glycerol 1-phospholipid + 8 A = a 2,3-bis-O-(geranylgeranyl)-sn-glycerol 1-phospholipid + 8 AH2. It catalyses the reaction 2,3-bis-O-(phytanyl)-sn-glycerol 1-phosphate + 8 A = 2,3-bis-O-(geranylgeranyl)-sn-glycerol 1-phosphate + 8 AH2. The enzyme catalyses CDP-2,3-bis-O-(geranylgeranyl)-sn-glycerol + 8 AH2 = CDP-2,3-bis-O-(phytanyl)-sn-glycerol + 8 A. The catalysed reaction is archaetidylserine + 8 AH2 = 2,3-bis-O-phytanyl-sn-glycero-3-phospho-L-serine + 8 A. Its pathway is membrane lipid metabolism; glycerophospholipid metabolism. In terms of biological role, is involved in the reduction of 2,3-digeranylgeranylglycerophospholipids (unsaturated archaeols) into 2,3-diphytanylglycerophospholipids (saturated archaeols) in the biosynthesis of archaeal membrane lipids. Catalyzes the formation of archaetidic acid (2,3-di-O-phytanyl-sn-glyceryl phosphate) from 2,3-di-O-geranylgeranylglyceryl phosphate (DGGGP) via the hydrogenation of each double bond of the isoprenoid chains. Is also probably able to reduce double bonds of geranyl groups in CDP-2,3-bis-O-(geranylgeranyl)-sn-glycerol and archaetidylserine, thus acting at various stages in the biosynthesis of archaeal membrane lipids. The sequence is that of Digeranylgeranylglycerophospholipid reductase 1 from Methanothermobacter thermautotrophicus (strain ATCC 29096 / DSM 1053 / JCM 10044 / NBRC 100330 / Delta H) (Methanobacterium thermoautotrophicum).